The primary structure comprises 297 residues: Phosphate import ATP-binding protein PstB (297 aa).

One can recognise an ABC transporter domain in the interval 50-292 (MRLRDVEVFY…PEHDLTEAYI (243 aa)). 82–89 (GPSGCGKS) serves as a coordination point for ATP.

It belongs to the ABC transporter superfamily. Phosphate importer (TC 3.A.1.7) family. The complex is composed of two ATP-binding proteins (PstB), two transmembrane proteins (PstC and PstA) and a solute-binding protein (PstS).

The protein resides in the cell inner membrane. The catalysed reaction is phosphate(out) + ATP + H2O = ADP + 2 phosphate(in) + H(+). Part of the ABC transporter complex PstSACB involved in phosphate import. Responsible for energy coupling to the transport system. The protein is Phosphate import ATP-binding protein PstB of Alcanivorax borkumensis (strain ATCC 700651 / DSM 11573 / NCIMB 13689 / SK2).